Here is a 224-residue protein sequence, read N- to C-terminus: Uridylate kinase (224 aa).

ATP is bound at residue 9–10 (GS). Glycine 43 is a UMP binding site. The ATP site is built by glycine 44 and arginine 48. Residues aspartate 65 and 113-119 (VVPGQTT) each bind UMP. Positions 139, 145, and 148 each coordinate ATP.

This sequence belongs to the UMP kinase family. Homohexamer.

It localises to the cytoplasm. It carries out the reaction UMP + ATP = UDP + ADP. Its pathway is pyrimidine metabolism; CTP biosynthesis via de novo pathway; UDP from UMP (UMPK route): step 1/1. Its activity is regulated as follows. Inhibited by UTP. Its function is as follows. Catalyzes the reversible phosphorylation of UMP to UDP. This Methanocella arvoryzae (strain DSM 22066 / NBRC 105507 / MRE50) protein is Uridylate kinase.